Here is a 340-residue protein sequence, read N- to C-terminus: Extracellular matrix protein-binding protein emp (340 aa).

The first 26 residues, 1 to 26 (MKKKLLVLTMSTLFATQLINSNHANA), serve as a signal peptide directing secretion.

Its subcellular location is the cell surface. In terms of biological role, adhesin that binds to the host cell extracellular matrix proteins fibronectin, fibrinogen, collagen, and vitronectin. The chain is Extracellular matrix protein-binding protein emp (emp) from Staphylococcus aureus.